Reading from the N-terminus, the 395-residue chain is Phosphoprotein (395 aa).

Disordered stretches follow at residues 34–104, 126–179, and 192–214; these read VGRS…ADEA, NKSS…GTDA, and LSAG…PAPV. A compositionally biased stretch (basic and acidic residues) spans 65 to 74; the sequence is TPDRQDRSDK. Polar residues-rich tracts occupy residues 89 to 98 and 147 to 178; these read PATSTDQPPT and PTQQ…QGTD. The segment at 222–285 is multimerization; that stretch reads DFVQAMMSMM…LGMMKILDPG (64 aa).

The protein belongs to the rubulavirus/avulavirus P protein family. Homotetramer. Interacts (via multimerization domain) with polymerase L; this interaction forms the polymerase L-P complex. Interacts (via N-terminus) with N0 (via Ncore); this interaction allows P to chaperon N0 to avoid N polymerization before encapsidation. Interacts (via C-terminus) with N-RNA template; this interaction positions the polymerase on the template for both transcription and replication.

Essential cofactor of the RNA polymerase L that plays a central role in the transcription and replication by forming the polymerase complex with RNA polymerase L and recruiting L to the genomic N-RNA template for RNA synthesis. Also plays a central role in the encapsidation of nascent RNA chains by forming the encapsidation complex with the nucleocapsid protein N (N-P complex). Acts as a chaperone for newly synthesized free N protein, so-called N0, allowing encapsidation of nascent RNA chains during replication. The nucleoprotein protein N prevents excessive phosphorylation of P, which leads to down-regulation of viral transcription/ replication. Participates, together with N, in the formation of viral factories (viroplasms), which are large inclusions in the host cytoplasm where replication takes place. The chain is Phosphoprotein (P/V) from Newcastle disease virus (strain Ulster/2C) (NDV).